The following is a 524-amino-acid chain: Probable myosin-binding protein 5 (524 aa).

The chain crosses the membrane as a helical span at residues 20 to 40 (FLIYALLEWILIIILFIDGFL). One can recognise a GTD-binding domain in the interval 299–397 (SILQHLNRQV…ELEAGIEVYR (99 aa)). Residues 462–490 (SRKDMLVKEISEITERLNAIESKGELLQQ) are a coiled coil.

Its subcellular location is the membrane. In terms of biological role, probable membrane-anchored myosin receptors. The chain is Probable myosin-binding protein 5 from Arabidopsis thaliana (Mouse-ear cress).